Reading from the N-terminus, the 911-residue chain is Protein translocase subunit SecA (911 aa).

Residues Gln86, Gly104–Thr108, and Asp494 each bind ATP. Residues Val856–Gly911 are disordered. A compositionally biased stretch (polar residues) spans Asp876 to Gly889. The segment covering Arg902 to Gly911 has biased composition (basic and acidic residues).

Belongs to the SecA family. In terms of assembly, monomer and homodimer. Part of the essential Sec protein translocation apparatus which comprises SecA, SecYEG and auxiliary proteins SecDF. Other proteins may also be involved.

It is found in the cell membrane. It localises to the cytoplasm. The enzyme catalyses ATP + H2O + cellular proteinSide 1 = ADP + phosphate + cellular proteinSide 2.. In terms of biological role, part of the Sec protein translocase complex. Interacts with the SecYEG preprotein conducting channel. Has a central role in coupling the hydrolysis of ATP to the transfer of proteins into and across the cell membrane, serving as an ATP-driven molecular motor driving the stepwise translocation of polypeptide chains across the membrane. This Micrococcus luteus (strain ATCC 4698 / DSM 20030 / JCM 1464 / CCM 169 / CCUG 5858 / IAM 1056 / NBRC 3333 / NCIMB 9278 / NCTC 2665 / VKM Ac-2230) (Micrococcus lysodeikticus) protein is Protein translocase subunit SecA.